Here is a 185-residue protein sequence, read N- to C-terminus: Ribonuclease M5 (185 aa).

The Toprim domain maps to 3–84 (KEVIVVEGRD…KHARISQSEG (82 aa)). 3 residues coordinate Mg(2+): glutamate 9, aspartate 55, and aspartate 57.

It belongs to the ribonuclease M5 family. It depends on Mg(2+) as a cofactor.

The protein localises to the cytoplasm. It carries out the reaction Endonucleolytic cleavage of RNA, removing 21 and 42 nucleotides, respectively, from the 5'- and 3'-termini of a 5S-rRNA precursor.. Required for correct processing of both the 5' and 3' ends of 5S rRNA precursor. Cleaves both sides of a double-stranded region yielding mature 5S rRNA in one step. This Clostridium acetobutylicum (strain ATCC 824 / DSM 792 / JCM 1419 / IAM 19013 / LMG 5710 / NBRC 13948 / NRRL B-527 / VKM B-1787 / 2291 / W) protein is Ribonuclease M5.